The sequence spans 189 residues: Segregation and condensation protein B (189 aa).

It belongs to the ScpB family. Homodimer. Homodimerization may be required to stabilize the binding of ScpA to the Smc head domains. Component of a cohesin-like complex composed of ScpA, ScpB and the Smc homodimer, in which ScpA and ScpB bind to the head domain of Smc. The presence of the three proteins is required for the association of the complex with DNA.

It is found in the cytoplasm. In terms of biological role, participates in chromosomal partition during cell division. May act via the formation of a condensin-like complex containing Smc and ScpA that pull DNA away from mid-cell into both cell halves. The polypeptide is Segregation and condensation protein B (Streptococcus sanguinis (strain SK36)).